Consider the following 459-residue polypeptide: Ribosomal protein uS12 methylthiotransferase RimO (459 aa).

The interval 1–28 is disordered; it reads MSTNPPDLRPDLAPKARLTQPDRPGQPT. The MTTase N-terminal domain occupies 27–137; that stretch reads PTIGMVSLGC…VLDAVHAAVP (111 aa). Residues C36, C72, C101, C168, C172, and C175 each contribute to the [4Fe-4S] cluster site. Positions 154–387 constitute a Radical SAM core domain; sequence LTPRHFSYLK…MAKSQDISEA (234 aa). Residues 390-457 enclose the TRAM domain; the sequence is AAKVAQRLEV…EYDLWGRLAP (68 aa).

It belongs to the methylthiotransferase family. RimO subfamily. The cofactor is [4Fe-4S] cluster.

Its subcellular location is the cytoplasm. It catalyses the reaction L-aspartate(89)-[ribosomal protein uS12]-hydrogen + (sulfur carrier)-SH + AH2 + 2 S-adenosyl-L-methionine = 3-methylsulfanyl-L-aspartate(89)-[ribosomal protein uS12]-hydrogen + (sulfur carrier)-H + 5'-deoxyadenosine + L-methionine + A + S-adenosyl-L-homocysteine + 2 H(+). In terms of biological role, catalyzes the methylthiolation of an aspartic acid residue of ribosomal protein uS12. This chain is Ribosomal protein uS12 methylthiotransferase RimO, found in Roseobacter denitrificans (strain ATCC 33942 / OCh 114) (Erythrobacter sp. (strain OCh 114)).